The following is a 369-amino-acid chain: Cystathionine gamma-synthase (369 aa).

K200 carries the post-translational modification N6-(pyridoxal phosphate)lysine.

The protein belongs to the trans-sulfuration enzymes family. In terms of assembly, homotetramer. Pyridoxal 5'-phosphate serves as cofactor.

It localises to the cytoplasm. It carries out the reaction O-succinyl-L-homoserine + L-cysteine = L,L-cystathionine + succinate + H(+). In terms of biological role, catalyzes the formation of L-cystathionine from O-succinyl-L-homoserine (OSHS) and L-cysteine, via a gamma-replacement reaction. In the absence of thiol, catalyzes gamma-elimination to form 2-oxobutanoate, succinate and ammonia. The protein is Cystathionine gamma-synthase (metB) of Haemophilus influenzae (strain ATCC 51907 / DSM 11121 / KW20 / Rd).